A 230-amino-acid chain; its full sequence is MQLTLTLSRASGMQLFLLVSSLLLWEKVASKPTAIVSTDDLYHCLVEQSHNTFIMAADVYREFDINFAKRSWMKDRILPLCHTASIHTPENLEEVHEMKTEDFLNSIINVSVSWKEPLKHLVVCSDCSSGASVSMGKKAVDMKDKNLIILEGLQTLYNRTQAKVEENFENFDYPAWSGLKDLDSSDEEHHLFAICNLCRCVKRDIHKIDTYLKVLRCRVVFKNECGVSTF.

Residues M1–A29 form the signal peptide. 2 disulfide bridges follow: C81–C200 and C217–C225. N-linked (GlcNAc...) asparagine glycans are attached at residues N109 and N158.

It belongs to the somatotropin/prolactin family.

Its subcellular location is the secreted. The protein is Prolactin-3D1 (Prl3d1) of Rattus norvegicus (Rat).